The sequence spans 385 residues: 6-hydroxynicotinate 3-monooxygenase (385 aa).

A signal peptide spans 1-20 (MSQSPRIAVVGAGLGGAAAA). FAD is bound by residues glycine 15, 34–35 (EQ), histidine 47, arginine 108, and leucine 130. Histidine 47 functions as the Proton acceptor in the catalytic mechanism. The active-site Proton acceptor is the tyrosine 215. Residues aspartate 294 and 307–308 (AA) each bind FAD.

It belongs to the 6-hydroxynicotinate 3-monooxygenase family. As to quaternary structure, monomer. It depends on FAD as a cofactor.

The enzyme catalyses 6-hydroxynicotinate + NADH + O2 + 2 H(+) = 2,5-dihydroxypyridine + CO2 + NAD(+) + H2O. With respect to regulation, inhibited competitively by nicotinic acid with a Ki of 0.49 mM. Inhibited by thiol-specific compounds p-chloromercuribenzoate, DTNB, Ag(2)SO(4), HgCl(2), CuCl(2) and N-ethylmaleimide. No inhibition by o-phenanthroline, 8-hydroxyquinoline, EDTA, disodium 4,5-dihydroxy-m-benzenedisulfonate, fluoride, azide, KCl, LiCl, NaCl, BaCl(2), MnCl(2), MgCl(2), PBCl, ZnCl(2), CoCl(2), SnCl(2), FeSO(4), FeCl(3), NiCl(2), CdCl(2), AlCl(3), iodoacetic acid, hydro-xylamine, phenylhydrazine, semicarbazide, cysteamine, alpha,alpha-dipyridyl and urea. Functionally, flavin-dependent monooxygenase (FMO) that catalyzes the decarboxylative hydroxylation of 6-hydroxynicotinic acid (6-HNA) to 2,5-dihydroxypyridine (2,5-DHP) with concomitant oxidation of NADH, a step in the aerobic nicotinate degradation pathway. Uses NADH in preference to NADPH as an electron donor. The chain is 6-hydroxynicotinate 3-monooxygenase (nicC) from Pseudomonas fluorescens.